Consider the following 689-residue polypeptide: Glycine--tRNA ligase beta subunit (689 aa).

This sequence belongs to the class-II aminoacyl-tRNA synthetase family. As to quaternary structure, tetramer of two alpha and two beta subunits.

It is found in the cytoplasm. The enzyme catalyses tRNA(Gly) + glycine + ATP = glycyl-tRNA(Gly) + AMP + diphosphate. In Klebsiella pneumoniae (strain 342), this protein is Glycine--tRNA ligase beta subunit.